A 63-amino-acid chain; its full sequence is DNA gyrase inhibitor YacG (63 aa).

The Zn(2+) site is built by Cys9, Cys12, Cys28, and Cys32.

This sequence belongs to the DNA gyrase inhibitor YacG family. In terms of assembly, interacts with GyrB. It depends on Zn(2+) as a cofactor.

Inhibits all the catalytic activities of DNA gyrase by preventing its interaction with DNA. Acts by binding directly to the C-terminal domain of GyrB, which probably disrupts DNA binding by the gyrase. This chain is DNA gyrase inhibitor YacG, found in Salmonella choleraesuis (strain SC-B67).